A 252-amino-acid chain; its full sequence is tRNA1(Val) (adenine(37)-N6)-methyltransferase (252 aa).

Belongs to the methyltransferase superfamily. tRNA (adenine-N(6)-)-methyltransferase family.

It is found in the cytoplasm. The enzyme catalyses adenosine(37) in tRNA1(Val) + S-adenosyl-L-methionine = N(6)-methyladenosine(37) in tRNA1(Val) + S-adenosyl-L-homocysteine + H(+). In terms of biological role, specifically methylates the adenine in position 37 of tRNA(1)(Val) (anticodon cmo5UAC). The chain is tRNA1(Val) (adenine(37)-N6)-methyltransferase from Yersinia pseudotuberculosis serotype O:3 (strain YPIII).